A 217-amino-acid polypeptide reads, in one-letter code: Acyl-homoserine-lactone synthase (217 aa).

It belongs to the autoinducer synthase family.

The enzyme catalyses a fatty acyl-[ACP] + S-adenosyl-L-methionine = an N-acyl-L-homoserine lactone + S-methyl-5'-thioadenosine + holo-[ACP] + H(+). Required for the synthesis of OHHL (N-(3-oxohexanoyl)-L-homoserine lactone), an autoinducer molecule which binds to ExpR and thus acts in virulence (soft rot disease) through the activation of genes for plant tissue macerating enzymes. The chain is Acyl-homoserine-lactone synthase (expI) from Pectobacterium parmentieri.